The chain runs to 276 residues: MDYLGIIMKIAIISGKGGVGKSSISTSLAKLFSKEFNIVALDCDVDAPNFNLMFDVKDKKLLEVIYREIYEINDDCIRCGKCLDVCQFDAIGDFKINPILCEGCGACELICEFDAIEPIKRESGYIYEGFVGFPLIWGELEVGESGSGKIIEHIKNHAKKYKAELGIIDGPPGVGCPLISTVKDVDLALCIVEPTKSSVNDCLRLIETLNFFNVEYLIVENKKGMNNINYPFKIFHSIPFDFDVPKLIANKILLCDSNSKVSESIKELYEKLKEFI.

Position 15-22 (15-22 (GKGGVGKS)) interacts with ATP. 4Fe-4S ferredoxin-type domains follow at residues 68 to 96 (EIYE…DFKI) and 92 to 121 (GDFK…PIKR). [4Fe-4S] cluster-binding residues include cysteine 76, cysteine 79, cysteine 82, cysteine 86, cysteine 101, cysteine 104, cysteine 107, and cysteine 111.

This is an uncharacterized protein from Methanocaldococcus jannaschii (strain ATCC 43067 / DSM 2661 / JAL-1 / JCM 10045 / NBRC 100440) (Methanococcus jannaschii).